Consider the following 311-residue polypeptide: tRNA dimethylallyltransferase (311 aa).

Residue 19-26 (GPSGSGKS) coordinates ATP. 21-26 (SGSGKS) contacts substrate. An interaction with substrate tRNA region spans residues 44–47 (DSLS).

It belongs to the IPP transferase family. As to quaternary structure, monomer. The cofactor is Mg(2+).

It carries out the reaction adenosine(37) in tRNA + dimethylallyl diphosphate = N(6)-dimethylallyladenosine(37) in tRNA + diphosphate. Its function is as follows. Catalyzes the transfer of a dimethylallyl group onto the adenine at position 37 in tRNAs that read codons beginning with uridine, leading to the formation of N6-(dimethylallyl)adenosine (i(6)A). The chain is tRNA dimethylallyltransferase from Helicobacter pylori (strain ATCC 700392 / 26695) (Campylobacter pylori).